A 263-amino-acid polypeptide reads, in one-letter code: Shikimate dehydrogenase (NADP(+)) (263 aa).

Shikimate contacts are provided by residues 21–23 (TLS) and Thr67. Catalysis depends on Lys71, which acts as the Proton acceptor. NADP(+) is bound at residue Glu83. Positions 92 and 103 each coordinate shikimate. NADP(+)-binding positions include 126–130 (GAGGA) and Leu204. Residue Tyr206 participates in shikimate binding. Gly227 contributes to the NADP(+) binding site.

This sequence belongs to the shikimate dehydrogenase family. In terms of assembly, homodimer.

It carries out the reaction shikimate + NADP(+) = 3-dehydroshikimate + NADPH + H(+). Its pathway is metabolic intermediate biosynthesis; chorismate biosynthesis; chorismate from D-erythrose 4-phosphate and phosphoenolpyruvate: step 4/7. Its function is as follows. Involved in the biosynthesis of the chorismate, which leads to the biosynthesis of aromatic amino acids. Catalyzes the reversible NADPH linked reduction of 3-dehydroshikimate (DHSA) to yield shikimate (SA). In Sulfolobus acidocaldarius (strain ATCC 33909 / DSM 639 / JCM 8929 / NBRC 15157 / NCIMB 11770), this protein is Shikimate dehydrogenase (NADP(+)).